A 496-amino-acid polypeptide reads, in one-letter code: MNFELKTLSLAAAAAYKCDLLVVLVPEGFLPGSDVLSTLTAHALKQGDLEVKPGKLLQCYAPAGVAARRVVLLGCGAADAHAVRQAMQALAPSFKLPSVKRVALVFGTSAQRGAIGAAVRAVSDGSYVYTATKTKAEPRALLRVTLGVPDAGAAQPEFATATAVAAGVEFAREWANRPANHATPTLVANAAKTLAKYPGVQCQVLGPTEVAKLGMGAFLAVAQGSDQPLRLVELRYNGAARTQAPVVLVGKGITFDTGGISLKPAAEMDEMKFDMGGAASVLGVFRALAELRPAINVVGLIPACENMPDGKAVKPGDVVTSMSGQTIEILNTDAEGRLVLCDALTYAARFKPAAVVDIATLTGACVVALGGLRSGLFASDDLLAEQLLSAGDAALDPCWRMPLDDEYAEGLKSNFADMANVAGRAGGSITAAKFLQRFVGDTPWAHLDIAGTAWKGGAAKGATGRPVGLLVHYLLERATVSTVKPKQKTRSRKSVA.

Positions 251 and 256 each coordinate Mn(2+). Residue Lys-263 is part of the active site. The Mn(2+) site is built by Asp-274, Asp-333, and Glu-335. Arg-337 is a catalytic residue.

The protein belongs to the peptidase M17 family. The cofactor is Mn(2+).

The protein resides in the cytoplasm. It carries out the reaction Release of an N-terminal amino acid, Xaa-|-Yaa-, in which Xaa is preferably Leu, but may be other amino acids including Pro although not Arg or Lys, and Yaa may be Pro. Amino acid amides and methyl esters are also readily hydrolyzed, but rates on arylamides are exceedingly low.. The catalysed reaction is Release of an N-terminal amino acid, preferentially leucine, but not glutamic or aspartic acids.. Its function is as follows. Presumably involved in the processing and regular turnover of intracellular proteins. Catalyzes the removal of unsubstituted N-terminal amino acids from various peptides. In Acidovorax ebreus (strain TPSY) (Diaphorobacter sp. (strain TPSY)), this protein is Probable cytosol aminopeptidase.